We begin with the raw amino-acid sequence, 536 residues long: Testis-specific expressed protein 55 (536 aa).

Low complexity predominate over residues 1 to 11 (MEEPPQEALAE). Disordered stretches follow at residues 1–287 (MEEP…PGTS) and 328–348 (SNAD…QTDH). Residues 35-52 (QKNQAERKADNHTAHRIA) show a composition bias toward basic and acidic residues. Composition is skewed to polar residues over residues 62 to 85 (QAES…STPG) and 105 to 136 (QVNQ…QVSG). Basic and acidic residues-rich tracts occupy residues 138-158 (TEER…ERRT) and 173-222 (RGSR…ERRP). The segment covering 226 to 242 (IDSGSSVPSDQSPSVQI) has biased composition (low complexity). The span at 243–255 (DSGSSVPSDQRPS) shows a compositional bias: polar residues. Over residues 339-348 (HYTESDQTDH) the composition is skewed to basic and acidic residues.

Testis-specific.

The protein resides in the nucleus. Its subcellular location is the cell projection. It localises to the cilium. It is found in the flagellum. The chain is Testis-specific expressed protein 55 from Homo sapiens (Human).